The chain runs to 688 residues: Probable glucan endo-1,3-beta-glucosidase btgC (688 aa).

3 disordered regions span residues 1 to 49, 61 to 91, and 169 to 194; these read MSGP…MNGQ, DGRQ…NLGP, and QLTP…DIPY. Over 1–307 the chain is Cytoplasmic; the sequence is MSGPNRTYSF…PKPGGGNKKR (307 aa). Over residues 175–188 the composition is skewed to polar residues; the sequence is SVSHLSSTNPSQRN. A helical; Signal-anchor for type II membrane protein membrane pass occupies residues 308–328; the sequence is GWIVGAILAFIIIGAIVGGAV. Residues 329 to 688 are Extracellular-facing; that stretch reads GGTIGHRGNE…IPDCGGKTAT (360 aa). Positions 334–363 are disordered; sequence HRGNEEPSSASSASSSSTQTATEDTSVNGD. Over residues 341-355 the composition is skewed to low complexity; sequence SSASSASSSSTQTAT. Residues Asn-408, Asn-431, and Asn-459 are each glycosylated (N-linked (GlcNAc...) asparagine). Residue Glu-491 is the Proton donor of the active site. The active-site Nucleophile is the Glu-590. N-linked (GlcNAc...) asparagine glycans are attached at residues Asn-609 and Asn-635.

Belongs to the glycosyl hydrolase 17 family.

It localises to the cell membrane. It carries out the reaction Hydrolysis of (1-&gt;3)-beta-D-glucosidic linkages in (1-&gt;3)-beta-D-glucans.. Functionally, glucanases play a role in cell expansion during growth, in cell-cell fusion during mating, and in spore release during sporulation. This enzyme may be involved in beta-glucan degradation. Active on laminarin and lichenan. In Aspergillus fumigatus (strain CBS 144.89 / FGSC A1163 / CEA10) (Neosartorya fumigata), this protein is Probable glucan endo-1,3-beta-glucosidase btgC (btgC).